The primary structure comprises 89 residues: MMTGTLGTLVPIILMFAVLYFLLIRPQQKQQKAVRQMQEELKKGDSVVTIGGLHGTVDSIDESKVVIKTGDNTRLTFDRRAIREVSAAE.

A helical membrane pass occupies residues 4–24 (GTLGTLVPIILMFAVLYFLLI).

The protein belongs to the YajC family. Part of the SecDF-YidC-YajC translocase complex. The SecDF-YidC-YajC translocase forms a supercomplex with SecYEG, called the holo-translocon (HTL).

The protein localises to the cell membrane. Its function is as follows. The SecYEG-SecDF-YajC-YidC holo-translocon (HTL) protein secretase/insertase is a supercomplex required for protein secretion, insertion of proteins into membranes, and assembly of membrane protein complexes. While the SecYEG complex is essential for assembly of a number of proteins and complexes, the SecDF-YajC-YidC subcomplex facilitates these functions. In Bacillus subtilis (strain 168), this protein is Sec translocon accessory complex subunit YrbF (yrbF).